Consider the following 256-residue polypeptide: MDKSTQIPPDSFAARLKQAMAMRNLKQETLAEAAGVSQNTIHKLTSGKAQSTRKLIEIAAALGVSPVWLQTGEGAPAARSAVSVADGSPLVLEPLHPWDSDTPLDEDEVELPLYKEVEMSAGAGRTAVREIEGRKLRFSYATLRASGVDPSAAICAQLTGNSMEPLIMDGSTIGVDTATTHITDGEIYALEHDGMLRVKFVYRLPGGGIRLRSFNREEYPDEEYSPEDMRSRQISMIGWVFWWSTVRHRRGPSLVR.

In terms of domain architecture, HTH cro/C1-type spans 16-69 (LKQAMAMRNLKQETLAEAAGVSQNTIHKLTSGKAQSTRKLIEIAAALGVSPVWL). A DNA-binding region (H-T-H motif) is located at residues 27–46 (QETLAEAAGVSQNTIHKLTS).

Represses the promoter activity of the prtN gene. The protein is HTH-type transcriptional regulator PrtR (prtR) of Pseudomonas aeruginosa (strain ATCC 15692 / DSM 22644 / CIP 104116 / JCM 14847 / LMG 12228 / 1C / PRS 101 / PAO1).